Here is a 669-residue protein sequence, read N- to C-terminus: DNA mismatch repair protein MutL (669 aa).

The interval 361–409 (ENVFSQPYQAPVTSSTQKKSTGAYQGSAGKGLTDTQKSPQKTLDTRQFG) is disordered. Polar residues-rich tracts occupy residues 363 to 384 (VFSQPYQAPVTSSTQKKSTGAY) and 393 to 402 (TDTQKSPQKT).

Belongs to the DNA mismatch repair MutL/HexB family.

This protein is involved in the repair of mismatches in DNA. It is required for dam-dependent methyl-directed DNA mismatch repair. May act as a 'molecular matchmaker', a protein that promotes the formation of a stable complex between two or more DNA-binding proteins in an ATP-dependent manner without itself being part of a final effector complex. The polypeptide is DNA mismatch repair protein MutL (Proteus mirabilis (strain HI4320)).